A 60-amino-acid chain; its full sequence is ALYITEECTYCGACEPECPVTAISAGDDIYVIDANTCNECAGLDEQACVAVCPAECIVQG.

2 4Fe-4S ferredoxin-type domains span residues 2-27 (LYIT…SAGD) and 28-60 (DIYV…IVQG). [4Fe-4S] cluster contacts are provided by cysteine 8, cysteine 11, cysteine 14, cysteine 18, cysteine 37, cysteine 40, cysteine 48, and cysteine 52.

Requires [4Fe-4S] cluster as cofactor.

Functionally, ferredoxins are iron-sulfur proteins that transfer electrons in a wide variety of metabolic reactions. The sequence is that of Ferredoxin-1 from Chlorobium limicola.